The sequence spans 126 residues: Transcription antitermination protein NusB (126 aa).

It belongs to the NusB family.

Its function is as follows. Involved in transcription antitermination. Required for transcription of ribosomal RNA (rRNA) genes. Binds specifically to the boxA antiterminator sequence of the ribosomal RNA (rrn) operons. The sequence is that of Transcription antitermination protein NusB from Oceanobacillus iheyensis (strain DSM 14371 / CIP 107618 / JCM 11309 / KCTC 3954 / HTE831).